The sequence spans 423 residues: UPF0229 protein Pfl01_5140 (423 aa).

The segment at 83–108 (TAGEHIARPPGGGGGRGPGKAGNSGE) is disordered. Positions 92–107 (PGGGGGRGPGKAGNSG) are enriched in gly residues.

It belongs to the UPF0229 family.

The sequence is that of UPF0229 protein Pfl01_5140 from Pseudomonas fluorescens (strain Pf0-1).